Consider the following 351-residue polypeptide: Histidinol-phosphate aminotransferase (351 aa).

The residue at position 215 (Lys215) is an N6-(pyridoxal phosphate)lysine.

It belongs to the class-II pyridoxal-phosphate-dependent aminotransferase family. Histidinol-phosphate aminotransferase subfamily. Pyridoxal 5'-phosphate serves as cofactor.

It catalyses the reaction L-histidinol phosphate + 2-oxoglutarate = 3-(imidazol-4-yl)-2-oxopropyl phosphate + L-glutamate. It participates in amino-acid biosynthesis; L-histidine biosynthesis; L-histidine from 5-phospho-alpha-D-ribose 1-diphosphate: step 7/9. This is Histidinol-phosphate aminotransferase from Methanocorpusculum labreanum (strain ATCC 43576 / DSM 4855 / Z).